The primary structure comprises 172 residues: MIITISGPPGSGTSTLARGLSEVLGVRWVNSGDLFRRIAAERGLSLKELGRLAEQGPEIDYLIDDAQRSLAKSGSGIFEGRLAGHMLDADLKIMLKTSLSVRASRIAKRENKSIEEALSEARAREECEARRYKMYYNIDINDLSIYDLIIDTGRWDERGTLSIALAAIRALK.

ATP is bound at residue Gly-7–Thr-15.

It belongs to the cytidylate kinase family. Type 2 subfamily.

The protein localises to the cytoplasm. It carries out the reaction CMP + ATP = CDP + ADP. It catalyses the reaction dCMP + ATP = dCDP + ADP. This Methanothrix thermoacetophila (strain DSM 6194 / JCM 14653 / NBRC 101360 / PT) (Methanosaeta thermophila) protein is Cytidylate kinase.